Reading from the N-terminus, the 412-residue chain is Chorismate synthase (412 aa).

Residues Arg-40 and Arg-46 each contribute to the NADP(+) site. FMN-binding positions include 134–136 (RAS), 255–256 (QA), Gly-299, 314–318 (KPIAT), and Arg-340.

The protein belongs to the chorismate synthase family. Homotetramer. It depends on FMNH2 as a cofactor.

The enzyme catalyses 5-O-(1-carboxyvinyl)-3-phosphoshikimate = chorismate + phosphate. Its pathway is metabolic intermediate biosynthesis; chorismate biosynthesis; chorismate from D-erythrose 4-phosphate and phosphoenolpyruvate: step 7/7. Functionally, catalyzes the anti-1,4-elimination of the C-3 phosphate and the C-6 proR hydrogen from 5-enolpyruvylshikimate-3-phosphate (EPSP) to yield chorismate, which is the branch point compound that serves as the starting substrate for the three terminal pathways of aromatic amino acid biosynthesis. This reaction introduces a second double bond into the aromatic ring system. The sequence is that of Chorismate synthase from Clavibacter michiganensis subsp. michiganensis (strain NCPPB 382).